Reading from the N-terminus, the 208-residue chain is Sexual inducer glycoprotein (208 aa).

An N-terminal signal peptide occupies residues 1 to 11 (MAVVVVNSATA). N-linked (GlcNAc...) asparagine glycans are attached at residues N89, N119, N131, N139, N146, and N188.

In terms of biological role, the sexual inducer is a glycoprotein synthesized and released by sexual males at about the time they release sperm packets. It is one of the most potent biological effector molecules known: it exhibits full effectiveness in converting asexually growing males and females to the sexual pathway at about 10(-7) m. This is Sexual inducer glycoprotein from Volvox carteri (Green alga).